We begin with the raw amino-acid sequence, 69 residues long: MFGLGTMEMVIILVIVLVIFGAGKLPKVMGDMGRGVKSFKKAMNAEDDAPAEPEVSKPAAAESTEKKDA.

A helical transmembrane segment spans residues 1 to 21 (MFGLGTMEMVIILVIVLVIFG). Positions 44–69 (NAEDDAPAEPEVSKPAAAESTEKKDA) are disordered.

This sequence belongs to the TatA/E family. The Tat system comprises two distinct complexes: a TatABC complex, containing multiple copies of TatA, TatB and TatC subunits, and a separate TatA complex, containing only TatA subunits. Substrates initially bind to the TatABC complex, which probably triggers association of the separate TatA complex to form the active translocon.

Its subcellular location is the cell inner membrane. Functionally, part of the twin-arginine translocation (Tat) system that transports large folded proteins containing a characteristic twin-arginine motif in their signal peptide across membranes. TatA could form the protein-conducting channel of the Tat system. The chain is Sec-independent protein translocase protein TatA from Magnetococcus marinus (strain ATCC BAA-1437 / JCM 17883 / MC-1).